The sequence spans 508 residues: Probable cytosol aminopeptidase (508 aa).

Residues lysine 274 and aspartate 279 each coordinate Mn(2+). The active site involves lysine 286. Mn(2+) is bound by residues aspartate 297, aspartate 356, and glutamate 358. Residue arginine 360 is part of the active site.

The protein belongs to the peptidase M17 family. Mn(2+) is required as a cofactor.

It localises to the cytoplasm. The catalysed reaction is Release of an N-terminal amino acid, Xaa-|-Yaa-, in which Xaa is preferably Leu, but may be other amino acids including Pro although not Arg or Lys, and Yaa may be Pro. Amino acid amides and methyl esters are also readily hydrolyzed, but rates on arylamides are exceedingly low.. The enzyme catalyses Release of an N-terminal amino acid, preferentially leucine, but not glutamic or aspartic acids.. Its function is as follows. Presumably involved in the processing and regular turnover of intracellular proteins. Catalyzes the removal of unsubstituted N-terminal amino acids from various peptides. This is Probable cytosol aminopeptidase from Paraburkholderia xenovorans (strain LB400).